A 215-amino-acid polypeptide reads, in one-letter code: Pyrrolidone-carboxylate peptidase (215 aa).

Residues Glu81, Cys144, and His168 contribute to the active site.

This sequence belongs to the peptidase C15 family. In terms of assembly, homotetramer.

The protein localises to the cytoplasm. The enzyme catalyses Release of an N-terminal pyroglutamyl group from a polypeptide, the second amino acid generally not being Pro.. Functionally, removes 5-oxoproline from various penultimate amino acid residues except L-proline. The polypeptide is Pyrrolidone-carboxylate peptidase (Bacillus licheniformis (strain ATCC 14580 / DSM 13 / JCM 2505 / CCUG 7422 / NBRC 12200 / NCIMB 9375 / NCTC 10341 / NRRL NRS-1264 / Gibson 46)).